The chain runs to 159 residues: RNA pyrophosphohydrolase (159 aa).

One can recognise a Nudix hydrolase domain in the interval 6-149 (GFRPNVGIIL…KREVYRRALK (144 aa)). Positions 38 to 59 (GGINARETPEEALFRELNEEVG) match the Nudix box motif.

This sequence belongs to the Nudix hydrolase family. RppH subfamily. A divalent metal cation serves as cofactor.

Functionally, accelerates the degradation of transcripts by removing pyrophosphate from the 5'-end of triphosphorylated RNA, leading to a more labile monophosphorylated state that can stimulate subsequent ribonuclease cleavage. This chain is RNA pyrophosphohydrolase, found in Stutzerimonas stutzeri (strain A1501) (Pseudomonas stutzeri).